We begin with the raw amino-acid sequence, 888 residues long: MLRQVLHRGLRTCFSRLGHFIASHPVFFASAPVLISILLGASFSRYQVEESVEHLLAPQHSLAKIERNLVNSLFPVNRSKHRLYSDLQTPGRYGRVIVTSYQKANMLDQHHTDLILKLHTAVTKIQVPRPGFNYTFAHICVLNNDKTCIVDDIVHVLEELKNARATNRTNFAITYPITHLKDGRAVYNGHQLGGVTVHSKDRVKSAEAIQLTYYLQSINSLNDMVAERWESSFCDTVKLFQKSNSKVKIYPYTSSSLREDFQKTSRVSERYLVTSLILVVTMAILCCSMQDCVRSKPWLGLLGLVTISLATLTAAGIINLTGGKYNSTFLGVPFVMLGHGLYGTFEMLSSWRKTREDQHVKERTAEVYADSMLSFSLTTAMYLVTFGIGASPFTNIEAARIFCCNSCIAILFNYLYVLSFYGSSLVFTGYIENNYQHSIFCRKVPKPDVLQEKPAWYRFLLTARFSEETAEGEEANTYESHLLVCFLKRYYCDWITNTYVKPFVVLFYLIYISFALMGYLQVSEGSDLSNIVATATQTIEYTTAHQKYFNNYSPVIGFYIYESIEYWNSSVQEDVLEYTKGFVRISWFESYLNYLRKLNVSTDLPKKNFTDMLRNSFLKTPQFSHFQEDIIFSKKYNDEVDVVASRMFLVAKTMETNREELYDLLETLRRLSVTSKVKFIVFNPSFVYMDRYASSLGAPLHNSCISALFLLFFSAFLVADSLINVWITLTVVSVEFGVIGFMTLWKVELDCISVLCLIYGINYTIDNCAPLLSTFVLGKDFTRTKWVKNALEVHGVAILQSYLCYIVGLFPLAAVPSNLTCTLFRCLFLIAFVTFFHCFAILPVILTFLPPSKKKRKEKKNPENREEIECVEMVDIDSTRVVDQITTV.

A helical membrane pass occupies residues 20-40; sequence FIASHPVFFASAPVLISILLG. 3 N-linked (GlcNAc...) asparagine glycosylation sites follow: N77, N133, and N167. An SSD domain is found at 268–427; that stretch reads SERYLVTSLI…LSFYGSSLVF (160 aa). The next 2 membrane-spanning stretches (helical) occupy residues 273–293 and 298–318; these read VTSL…QDCV and WLGL…AGII. N319 and N326 each carry an N-linked (GlcNAc...) asparagine glycan. 4 helical membrane passes run 328 to 348, 373 to 393, 407 to 427, and 502 to 522; these read TFLG…FEML, LSFS…ASPF, CIAI…SLVF, and PFVV…YLQV. 3 N-linked (GlcNAc...) asparagine glycosylation sites follow: N568, N599, and N608. A run of 2 helical transmembrane segments spans residues 707-727 and 738-758; these read ALFL…NVWI and VIGF…LCLI. Residue N762 is glycosylated (N-linked (GlcNAc...) asparagine). A helical membrane pass occupies residues 795–815; that stretch reads GVAILQSYLCYIVGLFPLAAV. N818 carries an N-linked (GlcNAc...) asparagine glycan. The helical transmembrane segment at 826–846 threads the bilayer; the sequence is CLFLIAFVTFFHCFAILPVIL.

It belongs to the patched family. As to expression, broadly expressed in the brain. Selectively expressed in the thalamic reticular nucleus (TRN) in early development and continues to be enriched in this structure throughout adult life.

Its subcellular location is the cell membrane. The protein resides in the cell projection. It is found in the dendritic spine. Its function is as follows. Required for the development and function of the thalamic reticular nucleus (TRN), a part of the thalamus that is critical for thalamocortical transmission, generation of sleep rhythms, sensorimotor processing and attention. Can bind cholesterol in vitro. This Mus musculus (Mouse) protein is Patched domain-containing protein 1.